The following is a 107-amino-acid chain: U1-lycotoxin-Ls1k (107 aa).

The signal sequence occupies residues 1–20 (MMKVLVVVALLVTLISYSSS). Positions 21-41 (EGIDDLEADELLSLMANEQTR) are excised as a propeptide. Disulfide bonds link C44–C59, C51–C68, C58–C86, and C70–C84.

This sequence belongs to the neurotoxin 19 (CSTX) family. 04 (U1-Lctx) subfamily. As to expression, expressed by the venom gland.

Its subcellular location is the secreted. The sequence is that of U1-lycotoxin-Ls1k from Lycosa singoriensis (Wolf spider).